The primary structure comprises 350 residues: MSKLGVVSWGAYIPRYRVRTEEVSRIWGDDPLRIVDMYLVDEKSVEGIDEDAVTIAVEAARRAIRRGGIDPRKIGAVYVGTESKPYAVKPISSILIDALGLTNNVFAVDMEFACKAGSDGLVAAIGLVEAGRVEYGMTVGTDTSQGEPGEHLEYSASSGGVALIVGKDGVAAELEAMYAFVSDTPDFWRREGSPYPMHGEGFTGEPAYFRHVIGAAKGLMEKYGYKPSDFTYVVFHQPNGRFPVRAASMLNIPLDKVKPGIVVTHIGNTYNASALMGFAKVLDIAKPGDKILLVPFGSGAGSNAFVFTVTDVVKDRQKMGVPTVEEMLQDKILVDYAQYLKMRKMIKLFE.

A (3S)-3-hydroxy-3-methylglutaryl-CoA-binding site is contributed by Asp-30. Glu-82 (proton donor/acceptor) is an active-site residue. Cys-114, Ser-155, Thr-203, and His-236 together coordinate (3S)-3-hydroxy-3-methylglutaryl-CoA. Cys-114 functions as the Acyl-thioester intermediate in the catalytic mechanism. Catalysis depends on His-236, which acts as the Proton donor/acceptor. Arg-241 is a CoA binding site. Residues Arg-245, Asn-268, and Ser-298 each coordinate (3S)-3-hydroxy-3-methylglutaryl-CoA.

This sequence belongs to the thiolase-like superfamily. Archaeal HMG-CoA synthase family. Interacts with acetoacetyl-CoA thiolase that catalyzes the precedent step in the pathway and with a DUF35 protein. The acetoacetyl-CoA thiolase/HMG-CoA synthase complex channels the intermediate via a fused CoA-binding site, which allows for efficient coupling of the endergonic thiolase reaction with the exergonic HMGCS reaction.

It catalyses the reaction acetoacetyl-CoA + acetyl-CoA + H2O = (3S)-3-hydroxy-3-methylglutaryl-CoA + CoA + H(+). Its pathway is metabolic intermediate biosynthesis; (R)-mevalonate biosynthesis; (R)-mevalonate from acetyl-CoA: step 2/3. Catalyzes the condensation of acetyl-CoA with acetoacetyl-CoA to form 3-hydroxy-3-methylglutaryl-CoA (HMG-CoA). Functions in the mevalonate (MVA) pathway leading to isopentenyl diphosphate (IPP), a key precursor for the biosynthesis of isoprenoid compounds that are building blocks of archaeal membrane lipids. This is Hydroxymethylglutaryl-CoA synthase from Pyrobaculum calidifontis (strain DSM 21063 / JCM 11548 / VA1).